We begin with the raw amino-acid sequence, 288 residues long: MPELPEVETVRRGLAPVMVGASFTTVEQRRADLRFPFPDNFAARLEGRRVEALGRRAKYLLADLDDAQVLVMHLGMSGSFRIEKAGDLASPPPGKNAAHDHVVFGLSTGTRIIYNDPRRFGFMHLIARQDLAGHPLFRNVGIEPLGNELEGALLARLFAGKTTPLKTALLDQTLIAGLGNIYVCEALHRAGLSPRRAAGTLAGKKGQPTERAHRLSEIIRAVLEEAIEAGGSSLRDHRQADGALGYFQHRFRVYDREAEPCPREGCGGTIKRIVQAGRSTFFCAKCQR.

The Schiff-base intermediate with DNA role is filled by proline 2. The active-site Proton donor is glutamate 3. The Proton donor; for beta-elimination activity role is filled by lysine 58. Positions 99, 118, and 161 each coordinate DNA. The segment at 252–288 (RVYDREAEPCPREGCGGTIKRIVQAGRSTFFCAKCQR) adopts an FPG-type zinc-finger fold. Arginine 278 acts as the Proton donor; for delta-elimination activity in catalysis.

The protein belongs to the FPG family. In terms of assembly, monomer. Requires Zn(2+) as cofactor.

The catalysed reaction is Hydrolysis of DNA containing ring-opened 7-methylguanine residues, releasing 2,6-diamino-4-hydroxy-5-(N-methyl)formamidopyrimidine.. It carries out the reaction 2'-deoxyribonucleotide-(2'-deoxyribose 5'-phosphate)-2'-deoxyribonucleotide-DNA = a 3'-end 2'-deoxyribonucleotide-(2,3-dehydro-2,3-deoxyribose 5'-phosphate)-DNA + a 5'-end 5'-phospho-2'-deoxyribonucleoside-DNA + H(+). Involved in base excision repair of DNA damaged by oxidation or by mutagenic agents. Acts as a DNA glycosylase that recognizes and removes damaged bases. Has a preference for oxidized purines, such as 7,8-dihydro-8-oxoguanine (8-oxoG). Has AP (apurinic/apyrimidinic) lyase activity and introduces nicks in the DNA strand. Cleaves the DNA backbone by beta-delta elimination to generate a single-strand break at the site of the removed base with both 3'- and 5'-phosphates. This chain is Formamidopyrimidine-DNA glycosylase, found in Beijerinckia indica subsp. indica (strain ATCC 9039 / DSM 1715 / NCIMB 8712).